Here is a 338-residue protein sequence, read N- to C-terminus: Phenylalanine--tRNA ligase alpha subunit (338 aa).

Residue Glu252 participates in Mg(2+) binding.

This sequence belongs to the class-II aminoacyl-tRNA synthetase family. Phe-tRNA synthetase alpha subunit type 1 subfamily. As to quaternary structure, tetramer of two alpha and two beta subunits. Requires Mg(2+) as cofactor.

The protein resides in the cytoplasm. It catalyses the reaction tRNA(Phe) + L-phenylalanine + ATP = L-phenylalanyl-tRNA(Phe) + AMP + diphosphate + H(+). In Pseudomonas entomophila (strain L48), this protein is Phenylalanine--tRNA ligase alpha subunit.